Here is a 376-residue protein sequence, read N- to C-terminus: uncharacterized protein (376 aa).

The protein belongs to the NAD(P)-dependent epimerase/dehydratase family.

This is an uncharacterized protein from Mycobacterium bovis (strain ATCC BAA-935 / AF2122/97).